A 514-amino-acid polypeptide reads, in one-letter code: CUGBP Elav-like family member 2 (514 aa).

RRM domains are found at residues Ile-44–Ser-127, Arg-136–Thr-216, and Ala-429–Ser-507.

Belongs to the CELF/BRUNOL family.

It localises to the nucleus. The protein resides in the cytoplasm. RNA-binding protein implicated in the regulation of several post-transcriptional events. May be involved in pre-mRNA alternative splicing, mRNA translation repression and stability. In Danio rerio (Zebrafish), this protein is CUGBP Elav-like family member 2 (celf2).